A 121-amino-acid polypeptide reads, in one-letter code: Somatostatin-1 (121 aa).

The first 24 residues, 1 to 24, serve as a signal peptide directing secretion; the sequence is MKMVSSSRLRCLLVLLLSLTASIS. Positions 25-105 are excised as a propeptide; it reads CSFAGQRDSK…SGGPLLAPRE (81 aa). A disordered region spans residues 76 to 99; that stretch reads NFPLAEGGPEDAHADLERAASGGP. Cys-110 and Cys-121 are oxidised to a cystine.

The protein belongs to the somatostatin family.

The protein localises to the secreted. Functionally, somatostatin inhibits the release of somatotropin. In Lophius americanus (American angler), this protein is Somatostatin-1 (sst1).